The sequence spans 290 residues: 1D-myo-inositol 2-acetamido-2-deoxy-alpha-D-glucopyranoside deacetylase (290 aa).

Zn(2+) contacts are provided by His-17, Asp-20, and His-150.

Belongs to the MshB deacetylase family. It depends on Zn(2+) as a cofactor.

It carries out the reaction 1D-myo-inositol 2-acetamido-2-deoxy-alpha-D-glucopyranoside + H2O = 1D-myo-inositol 2-amino-2-deoxy-alpha-D-glucopyranoside + acetate. In terms of biological role, catalyzes the deacetylation of 1D-myo-inositol 2-acetamido-2-deoxy-alpha-D-glucopyranoside (GlcNAc-Ins) in the mycothiol biosynthesis pathway. The chain is 1D-myo-inositol 2-acetamido-2-deoxy-alpha-D-glucopyranoside deacetylase from Corynebacterium glutamicum (strain R).